The chain runs to 221 residues: Phosphoribosylformylglycinamidine synthase subunit PurQ (221 aa).

Positions 2–221 (NVGVIVFPGS…FAGLLEPVAA (220 aa)) constitute a Glutamine amidotransferase type-1 domain. The active-site Nucleophile is cysteine 86. Residues histidine 194 and glutamate 196 contribute to the active site.

As to quaternary structure, part of the FGAM synthase complex composed of 1 PurL, 1 PurQ and 2 PurS subunits.

It is found in the cytoplasm. It catalyses the reaction N(2)-formyl-N(1)-(5-phospho-beta-D-ribosyl)glycinamide + L-glutamine + ATP + H2O = 2-formamido-N(1)-(5-O-phospho-beta-D-ribosyl)acetamidine + L-glutamate + ADP + phosphate + H(+). It carries out the reaction L-glutamine + H2O = L-glutamate + NH4(+). It participates in purine metabolism; IMP biosynthesis via de novo pathway; 5-amino-1-(5-phospho-D-ribosyl)imidazole from N(2)-formyl-N(1)-(5-phospho-D-ribosyl)glycinamide: step 1/2. Its function is as follows. Part of the phosphoribosylformylglycinamidine synthase complex involved in the purines biosynthetic pathway. Catalyzes the ATP-dependent conversion of formylglycinamide ribonucleotide (FGAR) and glutamine to yield formylglycinamidine ribonucleotide (FGAM) and glutamate. The FGAM synthase complex is composed of three subunits. PurQ produces an ammonia molecule by converting glutamine to glutamate. PurL transfers the ammonia molecule to FGAR to form FGAM in an ATP-dependent manner. PurS interacts with PurQ and PurL and is thought to assist in the transfer of the ammonia molecule from PurQ to PurL. The sequence is that of Phosphoribosylformylglycinamidine synthase subunit PurQ from Synechococcus sp. (strain ATCC 27144 / PCC 6301 / SAUG 1402/1) (Anacystis nidulans).